A 329-amino-acid chain; its full sequence is Fructose-1,6-bisphosphatase class 1 (329 aa).

4 residues coordinate Mg(2+): Glu-84, Asp-103, Leu-105, and Asp-106. Substrate contacts are provided by residues 106–109, Asn-196, and Lys-262; that span reads DGSS. Glu-268 serves as a coordination point for Mg(2+).

The protein belongs to the FBPase class 1 family. In terms of assembly, homotetramer. Mg(2+) serves as cofactor.

The protein resides in the cytoplasm. The enzyme catalyses beta-D-fructose 1,6-bisphosphate + H2O = beta-D-fructose 6-phosphate + phosphate. It functions in the pathway carbohydrate biosynthesis; gluconeogenesis. The chain is Fructose-1,6-bisphosphatase class 1 from Shewanella halifaxensis (strain HAW-EB4).